Here is a 132-residue protein sequence, read N- to C-terminus: Ribosome-binding factor A (132 aa).

The protein belongs to the RbfA family. In terms of assembly, monomer. Binds 30S ribosomal subunits, but not 50S ribosomal subunits or 70S ribosomes.

The protein localises to the cytoplasm. In terms of biological role, one of several proteins that assist in the late maturation steps of the functional core of the 30S ribosomal subunit. Associates with free 30S ribosomal subunits (but not with 30S subunits that are part of 70S ribosomes or polysomes). Required for efficient processing of 16S rRNA. May interact with the 5'-terminal helix region of 16S rRNA. This is Ribosome-binding factor A from Burkholderia vietnamiensis (strain G4 / LMG 22486) (Burkholderia cepacia (strain R1808)).